The sequence spans 361 residues: MVLDSTLREGEQTPGVNYTPEQRLEIAIALDEVGVDFIEIGHPAVSEDVFRGMKLIAEQGLNVELLAHSRALIEDIDYVLKTGVDWVGIFFCLSEACLRKRFRITLDHALEKISRAIEYAKDHGLKVRFTPEDTTRTEWANLKRAIRLAKELKVDRISVADTTGSTHPLRFYTLVKKIVNFGIPVNVHCHNDLGLALANAIMGIEAGATLVDATVNGLGERAGIVDLAQIITVLYYHYGIKKYRLDLLYRVSNLVSEITGISPQPNYPIVGENAFTHKAGLHVSAVLKDPRFYEFLPAEVFGRERTIYVDRYAGKDTIRYYLEKFGIRDHGIVTSLLRKVKSSREPFTWEKLLEEARRVKE.

Residues Met1–Val251 enclose the Pyruvate carboxyltransferase domain. 2-oxoglutarate is bound at residue Arg8. Glu9 is a Mg(2+) binding site. The 2-oxoglutarate site is built by His68, Arg128, and Thr162. Residues His188 and His190 each coordinate Mg(2+). The Proton acceptor role is filled by His282.

Belongs to the alpha-IPM synthase/homocitrate synthase family. Homocitrate synthase LYS20/LYS21 subfamily. Mg(2+) is required as a cofactor. The cofactor is Mn(2+).

The enzyme catalyses acetyl-CoA + 2-oxoglutarate + H2O = (2R)-homocitrate + CoA + H(+). It participates in amino-acid biosynthesis; L-lysine biosynthesis via AAA pathway; L-alpha-aminoadipate from 2-oxoglutarate: step 1/5. Catalyzes the aldol-type condensation of 2-oxoglutarate with acetyl-CoA to yield homocitrate. Carries out the first step of the alpha-aminoadipate (AAA) lysine biosynthesis pathway. The protein is Homocitrate synthase of Pyrococcus abyssi (strain GE5 / Orsay).